The chain runs to 271 residues: p-hydroxybenzoate hydroxylase transcriptional activator (271 aa).

The HTH iclR-type domain occupies 23-83; that stretch reads IAGLAKGLAL…TDEHYFWLTH (61 aa). The segment at residues 45-64 is a DNA-binding region (H-T-H motif); that stretch reads VTQVAERTGISRTAARRYLK. In terms of domain architecture, IclR-ED spans 98–271; the sequence is LPKVAQSFLN…NTANELRNLV (174 aa).

In terms of biological role, positive regulator of the pobA gene for p-hydroxybenzoate hydroxylase. This is p-hydroxybenzoate hydroxylase transcriptional activator (pobR) from Acinetobacter baylyi (strain ATCC 33305 / BD413 / ADP1).